The sequence spans 400 residues: NADH-quinone oxidoreductase subunit D (400 aa).

This sequence belongs to the complex I 49 kDa subunit family. In terms of assembly, NDH-1 is composed of 14 different subunits. Subunits NuoB, C, D, E, F, and G constitute the peripheral sector of the complex.

Its subcellular location is the cell inner membrane. The enzyme catalyses a quinone + NADH + 5 H(+)(in) = a quinol + NAD(+) + 4 H(+)(out). Functionally, NDH-1 shuttles electrons from NADH, via FMN and iron-sulfur (Fe-S) centers, to quinones in the respiratory chain. The immediate electron acceptor for the enzyme in this species is believed to be a menaquinone. Couples the redox reaction to proton translocation (for every two electrons transferred, four hydrogen ions are translocated across the cytoplasmic membrane), and thus conserves the redox energy in a proton gradient. The polypeptide is NADH-quinone oxidoreductase subunit D (Chlorobium phaeovibrioides (strain DSM 265 / 1930) (Prosthecochloris vibrioformis (strain DSM 265))).